We begin with the raw amino-acid sequence, 145 residues long: Large ribosomal subunit protein uL11 (145 aa).

It belongs to the universal ribosomal protein uL11 family. Part of the ribosomal stalk of the 50S ribosomal subunit. Interacts with L10 and the large rRNA to form the base of the stalk. L10 forms an elongated spine to which L12 dimers bind in a sequential fashion forming a multimeric L10(L12)X complex. One or more lysine residues are methylated.

In terms of biological role, forms part of the ribosomal stalk which helps the ribosome interact with GTP-bound translation factors. The chain is Large ribosomal subunit protein uL11 from Corynebacterium glutamicum (strain ATCC 13032 / DSM 20300 / JCM 1318 / BCRC 11384 / CCUG 27702 / LMG 3730 / NBRC 12168 / NCIMB 10025 / NRRL B-2784 / 534).